The following is a 272-amino-acid chain: Shikimate dehydrogenase (NADP(+)) (272 aa).

Shikimate contacts are provided by residues 14 to 16 and T61; that span reads SLS. Catalysis depends on K65, which acts as the Proton acceptor. Residue D102 participates in shikimate binding. NADP(+)-binding positions include 127–131, 151–156, and L215; these read GAGGA and NRTPSK. Residue Y217 coordinates shikimate. G239 is an NADP(+) binding site.

It belongs to the shikimate dehydrogenase family. As to quaternary structure, homodimer.

The enzyme catalyses shikimate + NADP(+) = 3-dehydroshikimate + NADPH + H(+). Its pathway is metabolic intermediate biosynthesis; chorismate biosynthesis; chorismate from D-erythrose 4-phosphate and phosphoenolpyruvate: step 4/7. In terms of biological role, involved in the biosynthesis of the chorismate, which leads to the biosynthesis of aromatic amino acids. Catalyzes the reversible NADPH linked reduction of 3-dehydroshikimate (DHSA) to yield shikimate (SA). This Coxiella burnetii (strain CbuG_Q212) (Coxiella burnetii (strain Q212)) protein is Shikimate dehydrogenase (NADP(+)).